Reading from the N-terminus, the 176-residue chain is ATP synthase subunit b, chloroplastic (176 aa).

The helical transmembrane segment at 27 to 49 (ILNLAAVFALLAYVGTDFVSSLL) threads the bilayer.

Belongs to the ATPase B chain family. As to quaternary structure, F-type ATPases have 2 components, F(1) - the catalytic core - and F(0) - the membrane proton channel. F(1) has five subunits: alpha(3), beta(3), gamma(1), delta(1), epsilon(1). F(0) has four main subunits: a(1), b(1), b'(1) and c(10-14). The alpha and beta chains form an alternating ring which encloses part of the gamma chain. F(1) is attached to F(0) by a central stalk formed by the gamma and epsilon chains, while a peripheral stalk is formed by the delta, b and b' chains.

It localises to the plastid. The protein localises to the chloroplast thylakoid membrane. Its function is as follows. F(1)F(0) ATP synthase produces ATP from ADP in the presence of a proton or sodium gradient. F-type ATPases consist of two structural domains, F(1) containing the extramembraneous catalytic core and F(0) containing the membrane proton channel, linked together by a central stalk and a peripheral stalk. During catalysis, ATP synthesis in the catalytic domain of F(1) is coupled via a rotary mechanism of the central stalk subunits to proton translocation. In terms of biological role, component of the F(0) channel, it forms part of the peripheral stalk, linking F(1) to F(0). The chain is ATP synthase subunit b, chloroplastic from Nephroselmis olivacea (Green alga).